The following is a 157-amino-acid chain: uncharacterized protein (157 aa).

A helical membrane pass occupies residues 6 to 26; that stretch reads LVGGVLRVLVVVGAVFDVAVL. The Ricin B-type lectin domain occupies 33-157; it reads ADGPVQLKSR…APDQQWDSVP (125 aa).

It is found in the membrane. This is an uncharacterized protein from Mycobacterium tuberculosis (strain CDC 1551 / Oshkosh).